A 437-amino-acid polypeptide reads, in one-letter code: MDSLDNTTLLLAPSSLLPDNLTLSPNAGSPSASTLSPLAVTSSPGPGLSLAPSPSIGFSPEATPTPEPTSSSLTVGVAGQGSSAFPRPWIPHEPPFWDTPLNHGLNVFVGAALCITMLGLGCTVDVNHFGAHVRRPVGALLAALCQFGFLPLLAFLLALIFKLDEVAAVAVLLCGCCPGGNLSNLMSLLVDGDMNLSIIMTISSTLLALVLMPLCLWIYSRAWINTPLVQLLPLGAVTLTLCSTLIPIGLGVFIRYKYNRVADYIVKVSLWSLLVTLVVLFIMTGTMLGPELLASIPATVYVVAIFMPLAGYASGYGLATLFHLPPNCKRTVCLETGSQNVQLCTAILKLAFPPRFIGSMYMFPLLYALFQSAEAGVFVLIYKMYGSEILHKREALDEDEDTDISYKKLKEEEMADTSYGTVGTDDLVMMETTQTAL.

Residues 1-103 lie on the Extracellular side of the membrane; sequence MDSLDNTTLL…PPFWDTPLNH (103 aa). N-linked (GlcNAc...) asparagine glycosylation is found at Asn6 and Asn20. Residues 15-79 form a disordered region; it reads SLLPDNLTLS…SSSLTVGVAG (65 aa). Residues 22–41 are compositionally biased toward polar residues; the sequence is TLSPNAGSPSASTLSPLAVT. The segment covering 42 to 74 has biased composition (low complexity); that stretch reads SSPGPGLSLAPSPSIGFSPEATPTPEPTSSSLT. The helical transmembrane segment at 104–124 threads the bilayer; that stretch reads GLNVFVGAALCITMLGLGCTV. At 125-140 the chain is on the cytoplasmic side; that stretch reads DVNHFGAHVRRPVGAL. The chain crosses the membrane as a helical span at residues 141–161; sequence LAALCQFGFLPLLAFLLALIF. The Extracellular portion of the chain corresponds to 162–197; sequence KLDEVAAVAVLLCGCCPGGNLSNLMSLLVDGDMNLS. Asn181 and Asn195 each carry an N-linked (GlcNAc...) asparagine glycan. Residues 198 to 218 traverse the membrane as a helical segment; sequence IIMTISSTLLALVLMPLCLWI. The Cytoplasmic segment spans residues 219–233; the sequence is YSRAWINTPLVQLLP. The helical transmembrane segment at 234–254 threads the bilayer; it reads LGAVTLTLCSTLIPIGLGVFI. Over 255–267 the chain is Extracellular; it reads RYKYNRVADYIVK. A helical membrane pass occupies residues 268-288; the sequence is VSLWSLLVTLVVLFIMTGTML. Over 289–291 the chain is Cytoplasmic; that stretch reads GPE. Residues 292 to 312 traverse the membrane as a helical segment; it reads LLASIPATVYVVAIFMPLAGY. Topologically, residues 313 to 360 are extracellular; that stretch reads ASGYGLATLFHLPPNCKRTVCLETGSQNVQLCTAILKLAFPPRFIGSM. The chain crosses the membrane as a helical span at residues 361–381; sequence YMFPLLYALFQSAEAGVFVLI. The Cytoplasmic portion of the chain corresponds to 382–437; that stretch reads YKMYGSEILHKREALDEDEDTDISYKKLKEEEMADTSYGTVGTDDLVMMETTQTAL.

This sequence belongs to the bile acid:sodium symporter (BASS) (TC 2.A.28) family. Post-translationally, activated following N-terminal proteolytic cleavage by thrombin and/or proteases. As to expression, highest expression in the brain and significantly above background levels in the eye, prostate, and whole embryo tissue preparations.

The protein resides in the cell membrane. Functionally, transporter for bile acids. This chain is Sodium/bile acid cotransporter 4 (Slc10a4), found in Mus musculus (Mouse).